Consider the following 203-residue polypeptide: Cupin-domain-containing oxidoreductase fogC (203 aa).

The interval 105–171 (DFAPGVESPL…GNGTLPGRML (67 aa)) is cupin-like domain.

It belongs to the virC family.

Its pathway is secondary metabolite biosynthesis. Functionally, cupin-domain-containing oxidoreductase; part of the gene cluster that mediates the biosynthesis of flavoglaucin and congeners (including aspergin, dihydroauroglaucin and auroglaucin), prenylated salicylaldehyde derivatives carrying a saturated or an unsaturated C-7 side chain. The PKS fogA releases the carboxylic acid (8E,10E,12E)-3,5,7-trihydroxytetradeca-8,10,12-trienoic acid as its product, as well as derivatives with one and two double bonds. FogA is indeed able to reduce the initial triketide, thus being at least partially responsible for the differently saturated heptyl side chains of flavoglaucin congeners. The oxidoreductases fogB, fogC and fogD modify the nascent polyketide in fogA-bound form and, together, fogA, fogB, fogC and fogD are necessary for the formation of the aromatic core and the cyclized PKS products are released as salicyl alcohols. In particular, fogB is responsible for oxidation of a hydroxyl group or reduction of remaining double bond(s) at the C-7 residue whereas fogD is probably involved in the reductive release of the modified PKS products. The cytochrome P450 monooxygenase fogE is then responsible for the hydroxylation at C-3 of the benzene ring. The fogE products are substrates of the prenyltransferase fogH and the prenylated benzyl alcohols are subsequently oxidized by the fogF to produce the final aryl aldehydes flavoglaucin and congeners. The short-chain dehydrogenase fogG does not seem to be involved in the biosynthesis of the prenylated salicylaldehyde derivatives. This is Cupin-domain-containing oxidoreductase fogC from Aspergillus ruber (strain CBS 135680).